Reading from the N-terminus, the 242-residue chain is Biosynthetic peptidoglycan transglycosylase (242 aa).

The helical transmembrane segment at 19–39 (LMVVLAVFWGGGIALFSVAPV) threads the bilayer.

This sequence belongs to the glycosyltransferase 51 family.

The protein localises to the cell inner membrane. The catalysed reaction is [GlcNAc-(1-&gt;4)-Mur2Ac(oyl-L-Ala-gamma-D-Glu-L-Lys-D-Ala-D-Ala)](n)-di-trans,octa-cis-undecaprenyl diphosphate + beta-D-GlcNAc-(1-&gt;4)-Mur2Ac(oyl-L-Ala-gamma-D-Glu-L-Lys-D-Ala-D-Ala)-di-trans,octa-cis-undecaprenyl diphosphate = [GlcNAc-(1-&gt;4)-Mur2Ac(oyl-L-Ala-gamma-D-Glu-L-Lys-D-Ala-D-Ala)](n+1)-di-trans,octa-cis-undecaprenyl diphosphate + di-trans,octa-cis-undecaprenyl diphosphate + H(+). It functions in the pathway cell wall biogenesis; peptidoglycan biosynthesis. In terms of biological role, peptidoglycan polymerase that catalyzes glycan chain elongation from lipid-linked precursors. This is Biosynthetic peptidoglycan transglycosylase from Escherichia coli O139:H28 (strain E24377A / ETEC).